Reading from the N-terminus, the 445-residue chain is Rab GDP dissociation inhibitor beta (445 aa).

Met-1 is subject to N-acetylmethionine. Lys-57 carries the post-translational modification N6-succinyllysine. Phosphoserine is present on Ser-61. N6-acetyllysine is present on Lys-112. Residue Ser-130 is modified to Phosphoserine. Lys-269 is subject to N6-acetyllysine. Ser-382 bears the Phosphoserine mark.

It belongs to the Rab GDI family. As to quaternary structure, interacts with RHOH. Interacts with the GDP-bound inactive forms of RAB3A, RAB3B, RAB3C, RAB5A, RAB5B, RAB5C, RAB8A, RAB8B, RAB10, RAB12, RAB35, and RAB43; binds RAB3D to a lesser extent. Interacts with DZIP1; this interaction negatively regulates the interaction of GDI2 with GDP-bound RAB8A. As to expression, ubiquitous.

It is found in the cytoplasm. Its subcellular location is the membrane. It localises to the golgi apparatus. The protein resides in the trans-Golgi network. Functionally, GDP-dissociation inhibitor preventing the GDP to GTP exchange of most Rab proteins. By keeping these small GTPases in their inactive GDP-bound form regulates intracellular membrane trafficking. Negatively regulates protein transport to the cilium and ciliogenesis through the inhibition of RAB8A. The sequence is that of Rab GDP dissociation inhibitor beta (GDI2) from Homo sapiens (Human).